The primary structure comprises 98 residues: ESAT-6-like protein EsxJ (98 aa).

It belongs to the WXG100 family. CFP-10 subfamily.

The protein localises to the secreted. The polypeptide is ESAT-6-like protein EsxJ (Mycobacterium bovis (strain ATCC BAA-935 / AF2122/97)).